The chain runs to 763 residues: Polyribonucleotide nucleotidyltransferase (763 aa).

2 residues coordinate Mg(2+): aspartate 526 and aspartate 532. In terms of domain architecture, KH spans proline 592–isoleucine 651. The S1 motif domain occupies glycine 663 to valine 732. Residues serine 739–alanine 763 are disordered. Positions alanine 743–glutamate 752 are enriched in basic and acidic residues.

It belongs to the polyribonucleotide nucleotidyltransferase family. Mg(2+) serves as cofactor.

It is found in the cytoplasm. It catalyses the reaction RNA(n+1) + phosphate = RNA(n) + a ribonucleoside 5'-diphosphate. In terms of biological role, involved in mRNA degradation. Catalyzes the phosphorolysis of single-stranded polyribonucleotides processively in the 3'- to 5'-direction. In Mycolicibacterium smegmatis (strain ATCC 700084 / mc(2)155) (Mycobacterium smegmatis), this protein is Polyribonucleotide nucleotidyltransferase.